Reading from the N-terminus, the 286-residue chain is Pantothenate synthetase (286 aa).

30-37 (MGYFHEGH) contributes to the ATP binding site. The active-site Proton donor is His37. Gln61 contacts (R)-pantoate. Gln61 contributes to the beta-alanine binding site. 147–150 (GKKD) provides a ligand contact to ATP. A (R)-pantoate-binding site is contributed by Gln153. An ATP-binding site is contributed by 184–187 (MSSR).

The protein belongs to the pantothenate synthetase family. Homodimer.

The protein resides in the cytoplasm. It carries out the reaction (R)-pantoate + beta-alanine + ATP = (R)-pantothenate + AMP + diphosphate + H(+). It participates in cofactor biosynthesis; (R)-pantothenate biosynthesis; (R)-pantothenate from (R)-pantoate and beta-alanine: step 1/1. Its function is as follows. Catalyzes the condensation of pantoate with beta-alanine in an ATP-dependent reaction via a pantoyl-adenylate intermediate. This is Pantothenate synthetase from Syntrophus aciditrophicus (strain SB).